The sequence spans 174 residues: Adenine phosphoribosyltransferase (174 aa).

It belongs to the purine/pyrimidine phosphoribosyltransferase family. Homodimer.

It localises to the cytoplasm. It carries out the reaction AMP + diphosphate = 5-phospho-alpha-D-ribose 1-diphosphate + adenine. The protein operates within purine metabolism; AMP biosynthesis via salvage pathway; AMP from adenine: step 1/1. Functionally, catalyzes a salvage reaction resulting in the formation of AMP, that is energically less costly than de novo synthesis. The chain is Adenine phosphoribosyltransferase from Mycobacterium sp. (strain JLS).